Here is a 753-residue protein sequence, read N- to C-terminus: Replication restart protein PriA (753 aa).

In terms of domain architecture, Helicase ATP-binding spans 228–395; that stretch reads SLITTKFQTC…LSKKYTLSVL (168 aa). 241 to 248 is a binding site for ATP; that stretch reads GVTGSGKT. Residues 337–340 carry the DEAH box motif; it reads DEEH. Positions 458, 461, 467, 470, 485, 488, 499, and 502 each coordinate Zn(2+). A Helicase C-terminal domain is found at 491–646; sequence RLSKPITSCP…DFPAFYKEEI (156 aa).

Belongs to the helicase family. PriA subfamily. Component of the replication restart primosome. Zn(2+) is required as a cofactor.

It carries out the reaction Couples ATP hydrolysis with the unwinding of duplex DNA by translocating in the 3'-5' direction.. The enzyme catalyses ATP + H2O = ADP + phosphate + H(+). Initiates the restart of stalled replication forks, which reloads the replicative helicase on sites other than the origin of replication. Recognizes and binds to abandoned replication forks and remodels them to uncover a helicase loading site. Promotes assembly of the primosome at these replication forks. This Chlamydia muridarum (strain MoPn / Nigg) protein is Replication restart protein PriA.